Here is a 387-residue protein sequence, read N- to C-terminus: Protein RecA (387 aa).

80-87 (GPESSGKT) is a binding site for ATP. Residues 348–387 (LDDSEVAETEEETTASKTKAKAKKEEKXVETEEIELELQD) are disordered. Composition is skewed to acidic residues over residues 349–360 (DDSEVAETEEET) and 378–387 (TEEIELELQD).

It belongs to the RecA family.

The protein resides in the cytoplasm. Functionally, can catalyze the hydrolysis of ATP in the presence of single-stranded DNA, the ATP-dependent uptake of single-stranded DNA by duplex DNA, and the ATP-dependent hybridization of homologous single-stranded DNAs. It interacts with LexA causing its activation and leading to its autocatalytic cleavage. The protein is Protein RecA of Lactococcus lactis subsp. cremoris (Streptococcus cremoris).